The primary structure comprises 20 residues: Sperm acrosome membrane-associated protein 3, processed form (20 aa).

It belongs to the glycosyl hydrolase 22 family.

Functionally, sperm surface membrane protein that may be involved in sperm-egg plasma membrane adhesion and fusion during fertilization. It could be a potential receptor for the egg oligosaccharide residue N-acetylglucosamine, which is present in the extracellular matrix over the egg plasma membrane. The polypeptide is Sperm acrosome membrane-associated protein 3, processed form (SPACA3) (Vulpes vulpes (Red fox)).